Consider the following 277-residue polypeptide: NADPH-dependent 7-cyano-7-deazaguanine reductase (277 aa).

83 to 85 (IES) serves as a coordination point for substrate. 85 to 86 (SK) provides a ligand contact to NADPH. Residue Cys184 is the Thioimide intermediate of the active site. Asp191 serves as the catalytic Proton donor. 223–224 (HE) contributes to the substrate binding site. 252-253 (RG) is a binding site for NADPH.

Belongs to the GTP cyclohydrolase I family. QueF type 2 subfamily. In terms of assembly, homodimer.

Its subcellular location is the cytoplasm. The enzyme catalyses 7-aminomethyl-7-carbaguanine + 2 NADP(+) = 7-cyano-7-deazaguanine + 2 NADPH + 3 H(+). The protein operates within tRNA modification; tRNA-queuosine biosynthesis. Functionally, catalyzes the NADPH-dependent reduction of 7-cyano-7-deazaguanine (preQ0) to 7-aminomethyl-7-deazaguanine (preQ1). The polypeptide is NADPH-dependent 7-cyano-7-deazaguanine reductase (Cupriavidus necator (strain ATCC 17699 / DSM 428 / KCTC 22496 / NCIMB 10442 / H16 / Stanier 337) (Ralstonia eutropha)).